Here is a 300-residue protein sequence, read N- to C-terminus: Cutinase est2 (300 aa).

Positions 1–39 (MSVTTPRRETSLLSRALRATAAAATAVVATVALAAPAQA) are cleaved as a signal peptide. Tyr99 serves as a coordination point for poly(ethylene terephthalate). The active-site Nucleophile is the Ser169. Residues Met170 and Trp194 each coordinate poly(ethylene terephthalate). Residue Glu213 coordinates Ca(2+). Residue Asp215 is the Charge relay system of the active site. Position 243 (Asp243) interacts with Ca(2+). His247 serves as the catalytic Charge relay system. A disulfide bridge links Cys280 with Cys298. Glu292 contributes to the Ca(2+) binding site.

This sequence belongs to the AB hydrolase superfamily. In terms of assembly, monomer. It depends on Ca(2+) as a cofactor.

The protein localises to the secreted. Its subcellular location is the periplasm. The enzyme catalyses an acetyl ester + H2O = an aliphatic alcohol + acetate + H(+). It catalyses the reaction (ethylene terephthalate)(n) + H2O = (ethylene terephthalate)(n-1) + 4-[(2-hydroxyethoxy)carbonyl]benzoate + H(+). The catalysed reaction is a butanoate ester + H2O = an aliphatic alcohol + butanoate + H(+). It carries out the reaction cutin + H2O = cutin monomers.. The enzyme catalyses a hexanoate ester + H2O = an aliphatic alcohol + hexanoate + H(+). It catalyses the reaction an octanoate ester + H2O = an aliphatic alcohol + octanoate + H(+). With respect to regulation, activated by calcium ions. Activated by magnesium ions. Activated by manganese ions. Inhibited by the serine hydrolase inhibitor phenylmethanesulfonyl fluoride (PMSF). Inhibited by the chelator ethylenediaminetetraacetic acid (EDTA). Inhibited by iron ions. Inhibited by aluminum ions. Inhibited by rubidium ions. Inhibited by lithium ions. Its function is as follows. Catalyzes the hydrolysis of cutin, a polyester that forms the structure of plant cuticle. Shows esterase activity towards p-nitrophenol-linked aliphatic esters (pNP-aliphatic esters). Capable of degrading the plastic poly(ethylene terephthalate) (PET), the most abundant polyester plastic in the world. Can also depolymerize the synthetic polyesters poly(epsilon-caprolactone) (PCL), poly(butylene succinate-co-adipate) (PBSA), poly(butylene succinate) (PBS), and poly(lactic acid) (PLA). In Thermobifida alba (Thermomonospora alba), this protein is Cutinase est2.